The sequence spans 150 residues: Large ribosomal subunit protein bL9 (150 aa).

The protein belongs to the bacterial ribosomal protein bL9 family.

In terms of biological role, binds to the 23S rRNA. This is Large ribosomal subunit protein bL9 from Vesicomyosocius okutanii subsp. Calyptogena okutanii (strain HA).